The chain runs to 525 residues: ALBINO3-like protein 2, chloroplastic (525 aa).

The next 4 helical transmembrane spans lie at 99–119 (WMIIASSTVAVRLALLPLLIL), 167–187 (LWFFPYLSVQLPCFFLLMASI), 217–237 (FGPVFPILIATFHYINIQISF), and 262–282 (ILSVPLFFVGYAIPQGSLVYW). TPR repeat units follow at residues 346 to 379 (PEELLSLSVQVLSKGDKETSIQLLRLALEKDPGY), 380 to 413 (VRGLVLMGQALLQKTQLSEATEYLELAISKLLDE), 425 to 458 (MLASQWAGAAYVQQGKLKSGIIHLERVAKLREPG), and 467 to 500 (FEALLLLSSALYKEGQSDEAAKILRVVVDHNPAY).

It belongs to the OXA1/ALB3/YidC (TC 2.A.9.2) family.

Its subcellular location is the plastid. It is found in the chloroplast thylakoid membrane. In terms of biological role, probably required for the insertion of integral membrane proteins into the chloroplast thylakoid membranes. This Arabidopsis thaliana (Mouse-ear cress) protein is ALBINO3-like protein 2, chloroplastic (ALB3L2).